Reading from the N-terminus, the 276-residue chain is SKA complex subunit 1 homolog (276 aa).

Residues 48–78 (VDVSLTAMEAQLQAVRRRLQEEREAFPKAKK) are a coiled coil.

Belongs to the SKA1 family.

In Oryza sativa subsp. japonica (Rice), this protein is SKA complex subunit 1 homolog.